Consider the following 371-residue polypeptide: Nicotinate-nucleotide pyrophosphorylase [carboxylating], chloroplastic (371 aa).

Residues 1-48 (MPAAAAAAAPPNPNVLQLAPRLRGLVSFPSSYSSSSPFSNRLRLRLPR) constitute a chloroplast transit peptide. Substrate-binding positions include Arg-162, 193–195 (TRK), Arg-217, Lys-227, Glu-260, Asp-287, 319–321 (SGN), and 340–342 (SGA).

It belongs to the NadC/ModD family.

The protein resides in the plastid. The protein localises to the chloroplast. It carries out the reaction nicotinate beta-D-ribonucleotide + CO2 + diphosphate = quinolinate + 5-phospho-alpha-D-ribose 1-diphosphate + 2 H(+). It participates in cofactor biosynthesis; NAD(+) biosynthesis; nicotinate D-ribonucleotide from quinolinate: step 1/1. Its function is as follows. Involved in the catabolism of quinolinic acid (QA). The chain is Nicotinate-nucleotide pyrophosphorylase [carboxylating], chloroplastic from Oryza sativa subsp. japonica (Rice).